We begin with the raw amino-acid sequence, 380 residues long: Dual-specificity RNA methyltransferase RlmN (380 aa).

E94 acts as the Proton acceptor in catalysis. Residues 100–339 (DGDRATLCVS…VTVRKTRGDD (240 aa)) form the Radical SAM core domain. The cysteines at positions 107 and 344 are disulfide-linked. C114, C118, and C121 together coordinate [4Fe-4S] cluster. Residues 168–169 (GE), S200, 222–224 (SLH), and N301 contribute to the S-adenosyl-L-methionine site. The active-site S-methylcysteine intermediate is the C344.

It belongs to the radical SAM superfamily. RlmN family. It depends on [4Fe-4S] cluster as a cofactor.

The protein localises to the cytoplasm. The enzyme catalyses adenosine(2503) in 23S rRNA + 2 reduced [2Fe-2S]-[ferredoxin] + 2 S-adenosyl-L-methionine = 2-methyladenosine(2503) in 23S rRNA + 5'-deoxyadenosine + L-methionine + 2 oxidized [2Fe-2S]-[ferredoxin] + S-adenosyl-L-homocysteine. It catalyses the reaction adenosine(37) in tRNA + 2 reduced [2Fe-2S]-[ferredoxin] + 2 S-adenosyl-L-methionine = 2-methyladenosine(37) in tRNA + 5'-deoxyadenosine + L-methionine + 2 oxidized [2Fe-2S]-[ferredoxin] + S-adenosyl-L-homocysteine. Its function is as follows. Specifically methylates position 2 of adenine 2503 in 23S rRNA and position 2 of adenine 37 in tRNAs. m2A2503 modification seems to play a crucial role in the proofreading step occurring at the peptidyl transferase center and thus would serve to optimize ribosomal fidelity. In Vibrio atlanticus (strain LGP32) (Vibrio splendidus (strain Mel32)), this protein is Dual-specificity RNA methyltransferase RlmN.